A 269-amino-acid polypeptide reads, in one-letter code: MQELIACVDHLRFDLELAVEQQLGAQPLPFPGMDKSGAAVCEFFLKSACGKGGMCPFRHISGEKTVVCKHWLRGLCKKGDQCEFLHEYDMTKMPECYFYSKFGECSNKECPFLHIDPESKIKDCPWYDRGFCKHGPLCRHRHTRRVICVNYLVGFCIEGPNCKFMHPRFELPMGTAEQPPLPQQTQNQQKQNNNQVLQRSSSLIQLTSQNSPVSQQRSPQTIGVMQLQSGTQGNRGPRPLDQVTCYKCGEKGHYANRCTKGHLAFLSGQ.

C3H1-type zinc fingers lie at residues 35–61 (KSGA…RHIS), 62–89 (GEKT…HEYD), 90–117 (MTKM…HIDP), 118–145 (ESKI…HTRR), and 146–169 (VICV…HPRF). Residues 173–197 (MGTAEQPPLPQQTQNQQKQNNNQVL) form a disordered region. Over residues 183 to 197 (QQTQNQQKQNNNQVL) the composition is skewed to low complexity. A CCHC-type zinc finger spans residues 243 to 260 (VTCYKCGEKGHYANRCTK).

It belongs to the CPSF4/YTH1 family. As to quaternary structure, component of the cleavage and polyadenylation specificity factor (CPSF) complex, composed of cpsf1, cpsf2, cpsf3, cpsf4 and fip1l1.

Its subcellular location is the nucleus. Functionally, component of the cleavage and polyadenylation specificity factor (CPSF) complex that play a key role in pre-mRNA 3'-end formation, recognizing the AAUAAA signal sequence and interacting with poly(A) polymerase and other factors to bring about cleavage and poly(A) addition. Cpsf4 binds RNA polymers with a preference for poly(U). The protein is Cleavage and polyadenylation specificity factor subunit 4 (cpsf4) of Xenopus laevis (African clawed frog).